The primary structure comprises 164 residues: Oocyte-expressed protein homolog (164 aa).

The KH; atypical domain maps to proline 44–leucine 105.

It belongs to the KHDC1 family. As to quaternary structure, component of the subcortical maternal complex (SCMC), at least composed of NLRP5, KHDC3, OOEP, and TLE6. Within the complex, interacts with NLRP5, KHDC3 and TLE6. The SCMC may facilitate translocation of its components between the nuclear and cytoplasmic compartments. As part of the SCMC interacts with the SCMC-associated protein NLRP4F. Forms a scaffold complex with KHDC3/FILIA, and interacts with BLM and TRIM25 at DNA replication forks. As to expression, expressed in ovaries, where it is restricted to growing oocytes, with greatest levels in fully grown oocytes.

The protein localises to the cytoplasm. It is found in the nucleus. Component of the subcortical maternal complex (SCMC), a multiprotein complex that plays a key role in early embryonic development. The SCMC complex is a structural constituent of cytoplasmic lattices, which consist in fibrous structures found in the cytoplasm of oocytes and preimplantation embryos. They are required to store maternal proteins critical for embryonic development, such as proteins that control epigenetic reprogramming of the preimplantation embryo, and prevent their degradation or activation. As part of the OOEP-KHDC3 scaffold, recruits BLM and TRIM25 to DNA replication forks, thereby promoting the ubiquitination of BLM by TRIM25, enhancing BLM retainment at replication forks and therefore promoting stalled replication fork restart. Positively regulates the homologous recombination-mediated DNA double-strand break (DSB) repair pathway by regulating ATM activation and RAD51 recruitment to DSBs in oocytes. Thereby contributes to oocyte survival and the resumption and completion of meiosis. This is Oocyte-expressed protein homolog from Mus musculus (Mouse).